A 355-amino-acid polypeptide reads, in one-letter code: NAD-dependent protein deacylase sirtuin-6 (355 aa).

Position 2 is an N-acetylserine (S2). Residue S10 is modified to Phosphoserine. Residues 27–272 (PEELERKVWE…TRLMKHLGLE (246 aa)) form the Deacetylase sirtuin-type domain. K33 is modified (N6-acetyllysine). Residues A53, T57, F64, R65, W71, Q113, and H133 each coordinate NAD(+). H133 (proton acceptor) is an active-site residue. Zn(2+)-binding residues include C141, C144, and C166. K170 is covalently cross-linked (Glycyl lysine isopeptide (Lys-Gly) (interchain with G-Cter in ubiquitin)). C177 contributes to the Zn(2+) binding site. NAD(+) is bound by residues G214, S216, N240, Q242, and V258. The tract at residues 284–355 (RALPPLPRPP…KRVKAEAVPS (72 aa)) is disordered. Over residues 287-296 (PPLPRPPTPK) the composition is skewed to pro residues. The residue at position 294 (T294) is a Phosphothreonine. Residues S303 and S330 each carry the phosphoserine modification.

It belongs to the sirtuin family. Class IV subfamily. Homodimer; binds to nucleosomes and DNA ends as a homodimer. Interacts with RELA; interferes with RELA binding to target DNA. Interacts with SMARCA5; promoting recruitment of SMARCA5/SNF2H to double-strand breaks (DSBs) sites. Interacts with the mTORC2 complex; preventing the ability of SIRT6 to deacetylate FOXO1. Interacts with the CLOCK-BMAL1 complex; recruited by the CLOCK-BMAL1 complex to regulate expression of clock-controlled genes. Interacts with CSNK2A2; preventing CSNK2A2 localization to the nucleus. Post-translationally, acetylated at Lys-33. Deacetylation at Lys-33 by SIRT1 promotes homomultimerization and binding to double-strand breaks (DSBs) sites. Phosphorylation at Ser-10 by MAPK8/JNK1 in response to oxidative stress stimulates the mono-ADP-ribosyltransferase activity on PARP1, leading to PARP1 recruitment to double-strand breaks (DSBs). In terms of processing, monoubiquitinated at Lys-170 by STUB1/CHIP, preventing its degradation by the proteasome. Post-translationally, sumoylated, leading to specifically decrease ability to deacetylate histone H3 at 'Lys-56' (H3K56ac).

Its subcellular location is the nucleus. The protein resides in the chromosome. The protein localises to the telomere. It is found in the endoplasmic reticulum. The catalysed reaction is N(6)-acetyl-L-lysyl-[protein] + NAD(+) + H2O = 2''-O-acetyl-ADP-D-ribose + nicotinamide + L-lysyl-[protein]. It carries out the reaction N(6)-tetradecanoyl-L-lysyl-[protein] + NAD(+) + H2O = 2''-O-tetradecanoyl-ADP-D-ribose + nicotinamide + L-lysyl-[protein]. The enzyme catalyses N(6)-hexadecanoyl-L-lysyl-[protein] + NAD(+) + H2O = 2''-O-hexadecanoyl-ADP-D-ribose + nicotinamide + L-lysyl-[protein]. It catalyses the reaction L-lysyl-[protein] + NAD(+) = N(6)-(ADP-D-ribosyl)-L-lysyl-[protein] + nicotinamide + H(+). The catalysed reaction is L-arginyl-[protein] + NAD(+) = N(omega)-(ADP-D-ribosyl)-L-arginyl-[protein] + nicotinamide + H(+). With respect to regulation, compared to the defatty-acylase activity, the protein deacetylase activity is weak in vitro, and requires activation. The histone deacetylase activity is strongly activated upon binding to nucleosomes and chromatin in vivo. Two molecules of SIRT6 associate with the acidic patch of one nucleosome, while the C-terminal disordered region of SIRT6 associates with nucleosomal DNA, leading to efficient histone deacetylation. The protein-lysine deacetylase activity is also activated by long-chain free fatty-acids. NAD-dependent protein deacetylase, deacylase and mono-ADP-ribosyltransferase that plays an essential role in DNA damage repair, telomere maintenance, metabolic homeostasis, inflammation, tumorigenesis and aging. Displays protein-lysine deacetylase or defatty-acylase (demyristoylase and depalmitoylase) activity, depending on the context. Acts as a key histone deacetylase by catalyzing deacetylation of histone H3 at 'Lys-9', 'Lys-18' and 'Lys-56' (H3K9ac, H3K18ac and H3K56ac, respectively), suppressing target gene expression of several transcription factors, including NF-kappa-B. Acts as an inhibitor of transcription elongation by mediating deacetylation of H3K9ac and H3K56ac, preventing release of NELFE from chromatin and causing transcriptional pausing. Involved in DNA repair by promoting double-strand break (DSB) repair: acts as a DSB sensor by recognizing and binding DSB sites, leading to (1) recruitment of DNA repair proteins, such as SMARCA5/SNF2H, and (2) deacetylation of histone H3K9ac and H3K56ac. SIRT6 participation to DSB repair is probably involved in extension of life span. Also promotes DNA repair by deacetylating non-histone proteins, such as DDB2 and p53/TP53. Specifically deacetylates H3K18ac at pericentric heterochromatin, thereby maintaining pericentric heterochromatin silencing at centromeres and protecting against genomic instability and cellular senescence. Involved in telomere maintenance by catalyzing deacetylation of histone H3 in telomeric chromatin, regulating telomere position effect and telomere movement in response to DNA damage. Required for embryonic stem cell differentiation by mediating histone deacetylation of H3K9ac. Plays a major role in metabolism by regulating processes such as glycolysis, gluconeogenesis, insulin secretion and lipid metabolism. Inhibits glycolysis via histone deacetylase activity and by acting as a corepressor of the transcription factor HIF1A, thereby controlling the expression of multiple glycolytic genes. Has tumor suppressor activity by repressing glycolysis, thereby inhibiting the Warburg effect. Also regulates glycolysis and tumorigenesis by mediating deacetylation and nuclear export of non-histone proteins, such as isoform M2 of PKM (PKM2). Acts as a negative regulator of gluconeogenesis by mediating deacetylation of non-histone proteins, such as FOXO1 and KAT2A/GCN5. Promotes beta-oxidation of fatty acids during fasting by catalyzing deacetylation of NCOA2, inducing coactivation of PPARA. Acts as a regulator of lipid catabolism in brown adipocytes, both by catalyzing deacetylation of histones and non-histone proteins, such as FOXO1. Also acts as a regulator of circadian rhythms, both by regulating expression of clock-controlled genes involved in lipid and carbohydrate metabolism, and by catalyzing deacetylation of PER2. The defatty-acylase activity is specifically involved in regulation of protein secretion. Has high activity toward long-chain fatty acyl groups and mediates protein-lysine demyristoylation and depalmitoylation of target proteins, such as RRAS2 and TNF, thereby regulating their secretion. Also acts as a mono-ADP-ribosyltransferase by mediating mono-ADP-ribosylation of PARP1, TRIM28/KAP1 or SMARCC2/BAF170. Mono-ADP-ribosyltransferase activity is involved in DNA repair, cellular senescence, repression of LINE-1 retrotransposon elements and regulation of transcription. This Macaca fascicularis (Crab-eating macaque) protein is NAD-dependent protein deacylase sirtuin-6.